Consider the following 369-residue polypeptide: MYGRSGLDRFKKSQTSEPFSVSANPPPVVQQHLSPEALSGQKTQIGAGQSNWHPPDWAIEPRAGVYSLEVVKDGQILDRIHLDRRRHIFGRQHQTCDFVLDHQSVSRQHAAVVPHKNGSIFVIDLGSAHGTFVANERLTKDTPVELEVGQSLRFAASTRIYLLRKNSEALFSRPPPPAEIKLPPPPDASDEEAVVAYNTLLNRYGLSNGESGGMLGKRKEKTGSEAGVAKRMKKVRVSFRDQLGGELAEIVGMSDGADVETEPGPINVKEGSLVGKYESLVRVTLIPKGKVKEEKAFTGGTRGGVTDRLQEAMNMLKRGPKTGIYDDLYGGDSLAKAVGTSWASVSQPAAETECGGVGEEDDNDDLFGD.

A compositionally biased stretch (basic and acidic residues) spans 1–11 (MYGRSGLDRFK). The segment at 1-26 (MYGRSGLDRFKKSQTSEPFSVSANPP) is disordered. Positions 13 to 23 (SQTSEPFSVSA) are enriched in polar residues. The FHA domain maps to 87 to 138 (HIFGRQHQTCDFVLDHQSVSRQHAAVVPHKNGSIFVIDLGSAHGTFVANERL). Positions 345–369 (VSQPAAETECGGVGEEDDNDDLFGD) are disordered. Positions 358-369 (GEEDDNDDLFGD) are enriched in acidic residues.

As to quaternary structure, interacts with human protein phosphatase PPP1C.

Inhibitor of protein-phosphatase 1 (PP1). Binds to and inhibits PP1 activity. The polypeptide is Protein phosphatase 1 regulatory inhibitor subunit PPP1R8 homolog (Arabidopsis thaliana (Mouse-ear cress)).